The following is a 414-amino-acid chain: MATPVRGETRNVIDDNISARIQSKVKTNDTVRQTPSSLRKVSIKDEQVRQYQRNLNRFKTILNGLKAEEEKLSEADDIQMLAEKLLKLGETIDKVENRIVDLVEKIQLLETNENNNILHEHIDATGTYYLFDTLTSTNKRFYPKDCVFDYRTNNVENIPILLNNFKKFIKKYQFDDVFENDIIEIDPRENEILCKIIKEGLGESLDIMNTNTTDIFRIIDGLKKQNIEVCMVEMSELEPGEKVLVDTTCRNSALLMNKLQKLVLMEKWIFSKCCQDCPNLKDYLQEAIMGTLHESLRNSVKQRLYNIPHDVGIDHEEFLINTVIETVIDLSPIADDQIENSCMYCKSVFHCSINCKKKPNRELRPDSTNFSKTYYLQGAQRQQPLKSSAKRTKVLEQDTKKVEQSVQQQKTGNY.

A coiled-coil region spans residues 39 to 115 (RKVSIKDEQV…IQLLETNENN (77 aa)). Residues 378–414 (GAQRQQPLKSSAKRTKVLEQDTKKVEQSVQQQKTGNY) form a disordered region. Positions 393–403 (KVLEQDTKKVE) are enriched in basic and acidic residues. Residues 404–414 (QSVQQQKTGNY) are compositionally biased toward polar residues.

Functionally, capsid protein (CA) is the structural component of the virus-like particle (VLP), forming the shell that encapsulates the retrotransposons dimeric RNA genome. This chain is Transposon Ty4-J Gag polyprotein (TY4A-J), found in Saccharomyces cerevisiae (strain ATCC 204508 / S288c) (Baker's yeast).